We begin with the raw amino-acid sequence, 274 residues long: MAIVKCKPTSAGRRHVVKVVNADLHKGKPYAPLLEKNSKNGGRNNNGRITVRHIGGGHKQHYRVVDFKRTKDGIPAKVERLEYDPNRSANIALVLYADGERRYIIAPKGMQAGDVIQSGVDAPIKAGNTLPMRNIPVGSTIHCVELTPGKGAQLARSAGAYAQLVARDGSYVTIRLRSGEMRKVLSEGRATIGEVGNSEHMLRELGKAGASRWRGVRPTVRGVVMNPVDHPHGGGEGRTSGGRHPVSPWGVPTKGYKTRSNKRTDKYIVRRRNK.

Positions 223 to 265 (VVMNPVDHPHGGGEGRTSGGRHPVSPWGVPTKGYKTRSNKRTD) are disordered.

This sequence belongs to the universal ribosomal protein uL2 family. Part of the 50S ribosomal subunit. Forms a bridge to the 30S subunit in the 70S ribosome.

Functionally, one of the primary rRNA binding proteins. Required for association of the 30S and 50S subunits to form the 70S ribosome, for tRNA binding and peptide bond formation. It has been suggested to have peptidyltransferase activity; this is somewhat controversial. Makes several contacts with the 16S rRNA in the 70S ribosome. The protein is Large ribosomal subunit protein uL2 of Vibrio vulnificus (strain CMCP6).